Here is a 425-residue protein sequence, read N- to C-terminus: SrfA-induced gene G protein (425 aa).

Asparagine 25, asparagine 28, and asparagine 36 each carry an N-linked (GlcNAc...) asparagine glycan. 3 coiled-coil regions span residues 41 to 91, 172 to 208, and 292 to 340; these read RDSE…RIRN, HEKQ…MKRT, and KFGQ…NYNI. Residues 91-113 form a helical membrane-spanning segment; it reads NVFKVLITILVGSIIYGTYTNQF. A disordered region spans residues 393–413; that stretch reads KKPHADSNGHPKPYPHHHLLN.

Its subcellular location is the membrane. The protein is SrfA-induced gene G protein (sigG) of Dictyostelium discoideum (Social amoeba).